The chain runs to 79 residues: Exodeoxyribonuclease 7 small subunit (79 aa).

Belongs to the XseB family. As to quaternary structure, heterooligomer composed of large and small subunits.

It localises to the cytoplasm. It carries out the reaction Exonucleolytic cleavage in either 5'- to 3'- or 3'- to 5'-direction to yield nucleoside 5'-phosphates.. In terms of biological role, bidirectionally degrades single-stranded DNA into large acid-insoluble oligonucleotides, which are then degraded further into small acid-soluble oligonucleotides. The polypeptide is Exodeoxyribonuclease 7 small subunit (Syntrophus aciditrophicus (strain SB)).